The following is a 154-amino-acid chain: MLNKRTTEVYALGQHISMSAHKARRVIDQIRGRSYEETLIILELMPYRACYPIFKLVYSAAANASSNMGSNEANLVISKAEVNKGTIMKRLKHRARGRSFAIQKPTCHITIVMKDISLDEYIDTDSITWSQNKKKDTTMPYYDMYSNGGTWDKK.

The protein belongs to the universal ribosomal protein uL22 family. In terms of assembly, part of the 50S ribosomal subunit.

It is found in the plastid. The protein localises to the chloroplast. Functionally, this protein binds specifically to 23S rRNA. In terms of biological role, the globular domain of the protein is located near the polypeptide exit tunnel on the outside of the subunit, while an extended beta-hairpin is found that lines the wall of the exit tunnel in the center of the 70S ribosome. This chain is Large ribosomal subunit protein uL22c (rpl22), found in Guizotia abyssinica (Niger).